A 503-amino-acid chain; its full sequence is Mitogen-activated protein kinase kinae mkk2 (503 aa).

The tract at residues 1–130 (MSSSPVPLLR…ASGPASASSS (130 aa)) is disordered. Positions 53–66 (APQPQRPSTRPAPP) are enriched in pro residues. The segment covering 100–115 (TGLNESTGHSRSSSFT) has biased composition (polar residues). Residues 121 to 130 (ASGPASASSS) are compositionally biased toward low complexity. The 271-residue stretch at 211–481 (IIELGSLGEG…PWRMLEHPWM (271 aa)) folds into the Protein kinase domain. Residues 217–225 (LGEGAGGAV) and Lys240 contribute to the ATP site. The active-site Proton acceptor is Asp338.

This sequence belongs to the protein kinase superfamily. STE Ser/Thr protein kinase family. MAP kinase kinase subfamily.

The catalysed reaction is L-seryl-[protein] + ATP = O-phospho-L-seryl-[protein] + ADP + H(+). It catalyses the reaction L-threonyl-[protein] + ATP = O-phospho-L-threonyl-[protein] + ADP + H(+). Mitogen-activated kinase kinase (MAPKK), part of the cell wall integrity (CWI) signaling pathway composed by three protein kinases bck1, mkk2 and mpkA and responsible for the maintaining of cell-wall integrity balance. The CWI pathway also regulates the oxidative stress response, as well as the production of some secondary metabolites including pyomelanin. This chain is Mitogen-activated protein kinase kinae mkk2, found in Aspergillus fumigatus (strain CBS 144.89 / FGSC A1163 / CEA10) (Neosartorya fumigata).